The primary structure comprises 155 residues: Small ribosomal subunit protein bS6 (155 aa).

The disordered stretch occupies residues 94–155 (EKHEEGPSAM…RPRRPREDRV (62 aa)).

Belongs to the bacterial ribosomal protein bS6 family.

Binds together with bS18 to 16S ribosomal RNA. This Rhizobium johnstonii (strain DSM 114642 / LMG 32736 / 3841) (Rhizobium leguminosarum bv. viciae) protein is Small ribosomal subunit protein bS6.